The following is a 434-amino-acid chain: UDP-N-acetylglucosamine 1-carboxyvinyltransferase (434 aa).

22–23 lines the phosphoenolpyruvate pocket; the sequence is KN. Residue arginine 97 coordinates UDP-N-acetyl-alpha-D-glucosamine. Residue aspartate 121 is the Proton donor of the active site. 2 residues coordinate UDP-N-acetyl-alpha-D-glucosamine: aspartate 319 and methionine 341.

This sequence belongs to the EPSP synthase family. MurA subfamily.

The protein resides in the cytoplasm. The catalysed reaction is phosphoenolpyruvate + UDP-N-acetyl-alpha-D-glucosamine = UDP-N-acetyl-3-O-(1-carboxyvinyl)-alpha-D-glucosamine + phosphate. Its pathway is cell wall biogenesis; peptidoglycan biosynthesis. Its function is as follows. Cell wall formation. Adds enolpyruvyl to UDP-N-acetylglucosamine. The protein is UDP-N-acetylglucosamine 1-carboxyvinyltransferase of Porphyromonas gingivalis (strain ATCC BAA-308 / W83).